Here is a 428-residue protein sequence, read N- to C-terminus: tRNA(Ile)-lysidine synthase (428 aa).

28-33 (SGGVDS) contributes to the ATP binding site.

Belongs to the tRNA(Ile)-lysidine synthase family.

It localises to the cytoplasm. The catalysed reaction is cytidine(34) in tRNA(Ile2) + L-lysine + ATP = lysidine(34) in tRNA(Ile2) + AMP + diphosphate + H(+). Its function is as follows. Ligates lysine onto the cytidine present at position 34 of the AUA codon-specific tRNA(Ile) that contains the anticodon CAU, in an ATP-dependent manner. Cytidine is converted to lysidine, thus changing the amino acid specificity of the tRNA from methionine to isoleucine. This is tRNA(Ile)-lysidine synthase from Streptococcus pyogenes serotype M18 (strain MGAS8232).